Reading from the N-terminus, the 86-residue chain is Small ribosomal subunit protein bS16 (86 aa).

The protein belongs to the bacterial ribosomal protein bS16 family.

The sequence is that of Small ribosomal subunit protein bS16 from Borrelia garinii subsp. bavariensis (strain ATCC BAA-2496 / DSM 23469 / PBi) (Borreliella bavariensis).